A 455-amino-acid chain; its full sequence is Beta-cyclopiazonate dehydrogenase (455 aa).

Residues 1–25 form the signal peptide; sequence MAVRIARFLGLSTVAYLALANGIDA.

Belongs to the beta-cyclopiazonate dehydrogenase family. It depends on FAD as a cofactor.

The enzyme catalyses beta-cyclopiazonate + A = alpha-cyclopiazonate + AH2. Beta-cyclopiazonate dehydrogenase involved in the synthesis of the fungal neurotoxin alpha-cyclopiazonic acid (CPA). CpaO carries out the dehydrogenation of beta-CPA to yield an unstable enimine product, which is captured by intramolecular cyclization to create the pentacyclic fused scaffold of alpha-cyclopiazonate. The chain is Beta-cyclopiazonate dehydrogenase from Aspergillus oryzae (strain ATCC 42149 / RIB 40) (Yellow koji mold).